A 628-amino-acid chain; its full sequence is ATP-binding cassette sub-family F member 2 (628 aa).

Residues Met1–Glu57 form a disordered region. Over residues Ala40–Thr53 the composition is skewed to basic and acidic residues. ABC transporter domains are found at residues Val91–Met330 and Ile401–Glu618. ATP is bound at residue Gly123–Ser130. Residue Thr223 is modified to Phosphothreonine. Lys309 carries the N6-acetyllysine modification. Residue Gly435–Ser442 coordinates ATP. Ser517 is subject to Phosphoserine.

This sequence belongs to the ABC transporter superfamily. ABCF family. EF3 subfamily.

The chain is ATP-binding cassette sub-family F member 2 from Mus musculus (Mouse).